The following is a 1026-amino-acid chain: RecBCD enzyme subunit RecB (1026 aa).

One can recognise a UvrD-like helicase ATP-binding domain in the interval 1–438 (MSSFDIFSPT…LILDTNYRST (438 aa)). Positions 1-766 (MSSFDIFSPT…LANYANVTKH (766 aa)) are DNA-binding and helicase activity, interacts with RecC. Residue 21–28 (ASAGTGKT) participates in ATP binding. Positions 815–1026 (SRTIHSFSST…KGNGFLQPGR (212 aa)) are nuclease activity, interacts with RecD and RecA. Residues His854, Asp940, and Asp953 each coordinate Mg(2+). Catalysis depends on Asp953, which acts as the For nuclease activity.

Belongs to the helicase family. UvrD subfamily. As to quaternary structure, heterotrimer of RecB, RecC and RecD. All subunits contribute to DNA-binding. Interacts with RecA. Mg(2+) serves as cofactor.

It carries out the reaction Exonucleolytic cleavage (in the presence of ATP) in either 5'- to 3'- or 3'- to 5'-direction to yield 5'-phosphooligonucleotides.. The catalysed reaction is Couples ATP hydrolysis with the unwinding of duplex DNA by translocating in the 3'-5' direction.. It catalyses the reaction ATP + H2O = ADP + phosphate + H(+). Functionally, a helicase/nuclease that prepares dsDNA breaks (DSB) for recombinational DNA repair. Binds to DSBs and unwinds DNA via a highly rapid and processive ATP-dependent bidirectional helicase activity. Unwinds dsDNA until it encounters a Chi (crossover hotspot instigator) sequence from the 3' direction. Cuts ssDNA a few nucleotides 3' to the Chi site. The properties and activities of the enzyme are changed at Chi. The Chi-altered holoenzyme produces a long 3'-ssDNA overhang and facilitates RecA-binding to the ssDNA for homologous DNA recombination and repair. Holoenzyme degrades any linearized DNA that is unable to undergo homologous recombination. In the holoenzyme this subunit contributes ATPase, 3'-5' helicase, exonuclease activity and loads RecA onto ssDNA. The protein is RecBCD enzyme subunit RecB of Chlamydia trachomatis serovar D (strain ATCC VR-885 / DSM 19411 / UW-3/Cx).